The sequence spans 368 residues: MSDNTVKIKKQTIDPTLTLEDVKKQLIEKGKKEGHLSHEEIAEKLQNFDIDSDQMDDFFDQLNDNDISLVNEKDSSDTDEKLNPSDLSAPPGVKINDPVRMYLKEIGRVNLLSAQEEIELAKRIEQGDEVAKSRLAEANLRLVVSIAKRYVGRGMLFLDLIQEGNMGLIKAVEKFDFNKGFKFSTYATWWIRQAITRAIADQARTIRIPVHMVETINKLIRVQRQLLQDLGRDPAPEEIGEEMDLPAEKVREVLKIAQEPVSLETPIGEEDDSHLGDFIEDQEAQSPSDHAAYELLKEQLEDVLDTLTDREENVLRLRFGLDDGRTRTLEEVGKVFGVTRERIRQIEAKALRKLRHPSRSKRLKDFMD.

The interval 69–90 (LVNEKDSSDTDEKLNPSDLSAP) is disordered. The segment covering 71–83 (NEKDSSDTDEKLN) has biased composition (basic and acidic residues). A sigma-70 factor domain-2 region spans residues 135–205 (LAEANLRLVV…TRAIADQART (71 aa)). An Interaction with polymerase core subunit RpoC motif is present at residues 159 to 162 (DLIQ). Residues 214–290 (ETINKLIRVQ…DQEAQSPSDH (77 aa)) form a sigma-70 factor domain-3 region. Residues 303 to 356 (VLDTLTDREENVLRLRFGLDDGRTRTLEEVGKVFGVTRERIRQIEAKALRKLRH) are sigma-70 factor domain-4. A DNA-binding region (H-T-H motif) is located at residues 329–348 (LEEVGKVFGVTRERIRQIEA).

This sequence belongs to the sigma-70 factor family. RpoD/SigA subfamily. Interacts transiently with the RNA polymerase catalytic core.

The protein resides in the cytoplasm. In terms of biological role, sigma factors are initiation factors that promote the attachment of RNA polymerase to specific initiation sites and are then released. This sigma factor is the primary sigma factor during exponential growth. The sequence is that of RNA polymerase sigma factor SigA from Staphylococcus aureus (strain N315).